The primary structure comprises 559 residues: Leucine-rich repeat-containing protein 71 (559 aa).

Residues 1-18 are compositionally biased toward low complexity; sequence MSSEQSAPGASPRAPRPG. A disordered region spans residues 1-56; that stretch reads MSSEQSAPGASPRAPRPGTQKSSGAVTKKGERAAKEKPATVLPPVGEEEPKSPEEY. The span at 28–38 shows a compositional bias: basic and acidic residues; that stretch reads KKGERAAKEKP. LRR repeat units lie at residues 172-193, 196-216, 221-241, 253-266, and 281-302; these read NLWKVGLTDKTLTTFIELLPLC, TLRKVSLEGNPLPEQSYHKLM, TIAHLSLRNNNIDDRGAQLLG, TLVSLNLGFNHIGD, and SLLWLSLAHNRIQDKGALKLAE. Composition is skewed to basic and acidic residues over residues 324–348 and 380–391; these read KGTQERSRSPSSSRHGDSKTDREKS and KSWELAKKEEKL. The interval 324 to 427 is disordered; that stretch reads KGTQERSRSP…PEQKPSRAKG (104 aa).

The polypeptide is Leucine-rich repeat-containing protein 71 (LRRC71) (Homo sapiens (Human)).